Consider the following 529-residue polypeptide: MRGAMKPSIVHCLKLLMLLALGGVTMHVPDEDDVVASLGALRLDGHFSFDDAHAAARDFGNRCSLLPAAVLHPGSVSDVAATVRRVFQLGRSSPLTVAARGHGHSLLGQSQAAGGIVVKMESLAAAAARAVRVHGGASPHVDAPGGELWINVLHETLKHGLAPRSWTDYLHLTVGGTLSNAGVSGQAFRHGPQVSNVNQLEIVTGRGEVVTCSHEVNSDLFYAALGGLGQFGIITRARIALEPAPKMVRWIRVLYSDFETFTEDQEKLIASEKTFDYIEGFVIINRTGILNNWRTSFKPQDPVQASQFQSDGRVLYCLELTMNFNHDEADIMEQEVGALLSRLRYISSTLFYTDVTYLEFLDRVHTSELKLRAQGLWEVPHPWLNLLIPRSTVHKFAKEVFGKILKDSNNGPILLYPVNRTKWDNRTSVVIPDEEIFYLVGFLSSAPSSSGHGSVEHAMNLNNKIVDFCEKNGVGMKQYLAPYTTQKQWKAHFGARWETFERRKHTYDPLAILAPGQRIFPKASLPMSL.

A signal peptide spans 1–27 (MRGAMKPSIVHCLKLLMLLALGGVTMH). The FAD-binding PCMH-type domain maps to 63–244 (CSLLPAAVLH…TRARIALEPA (182 aa)). Residues alanine 99, glycine 101, and glycine 103 each coordinate FAD. Histidine 104 carries the pros-8alpha-FAD histidine modification. FAD is bound by residues serine 105, glutamine 109, aspartate 168, threonine 173, serine 179, valine 183, and isoleucine 234. 3 N-linked (GlcNAc...) asparagine glycosylation sites follow: asparagine 285, asparagine 419, and asparagine 425. Tyrosine 479 and glutamine 517 together coordinate FAD.

It belongs to the oxygen-dependent FAD-linked oxidoreductase family. In terms of assembly, monomer. FAD serves as cofactor. Expressed in inflorescence meristems.

It is found in the secreted. Its subcellular location is the extracellular space. It carries out the reaction N(6)-dimethylallyladenine + A + H2O = 3-methyl-2-butenal + adenine + AH2. Catalyzes the oxidation of cytokinins, a family of N(6)-substituted adenine derivatives that are plant hormones, where the substituent is an isopentenyl group. The polypeptide is Cytokinin dehydrogenase 4 (CKX4) (Oryza sativa subsp. japonica (Rice)).